A 260-amino-acid polypeptide reads, in one-letter code: Thiazole synthase (260 aa).

Lys96 functions as the Schiff-base intermediate with DXP in the catalytic mechanism. 1-deoxy-D-xylulose 5-phosphate is bound by residues Gly157, 184 to 185, and 206 to 207; these read AG and NT.

This sequence belongs to the ThiG family. In terms of assembly, homotetramer. Forms heterodimers with either ThiH or ThiS.

It is found in the cytoplasm. The catalysed reaction is [ThiS sulfur-carrier protein]-C-terminal-Gly-aminoethanethioate + 2-iminoacetate + 1-deoxy-D-xylulose 5-phosphate = [ThiS sulfur-carrier protein]-C-terminal Gly-Gly + 2-[(2R,5Z)-2-carboxy-4-methylthiazol-5(2H)-ylidene]ethyl phosphate + 2 H2O + H(+). The protein operates within cofactor biosynthesis; thiamine diphosphate biosynthesis. In terms of biological role, catalyzes the rearrangement of 1-deoxy-D-xylulose 5-phosphate (DXP) to produce the thiazole phosphate moiety of thiamine. Sulfur is provided by the thiocarboxylate moiety of the carrier protein ThiS. In vitro, sulfur can be provided by H(2)S. The sequence is that of Thiazole synthase from Rhodopseudomonas palustris (strain HaA2).